Reading from the N-terminus, the 453-residue chain is MSIVTVQLGQCGNQIGFEVFDALLSDSHSSQGLCSMRENEAYQASCKERFFSEEENGVPIARAVLVDMEPKVINQMLSKAAQSGQWKYGQHACFCQKQGSGNNWAYGYSVHGPRHEESIMNIIRKEVEKCDSFSGFFIIMSMAGGTGSGLGAFVTQNLEDQYSNSLKMNQIIWPYGTGEVIVQNYNSILTLSHLYRSSDALLLHENDAIHKICAKLMNIKQISFSDINQVLAHQLGSVFQPTYSAESSFHYRRNPLGDLMEHLVPHPEFKMLSVRNIPHMSENSLAYTTFTWAGLLKHLRQMLISNAKMEEGIDRHVWPPLSGLPPLSKMSLNKDLHFNTSIANLVILRGKDVQSADVEGFKDPALYTSWLKPVNAFNVWKTQRAFSKYEKSAVLVSNSQFLVKPLDMIVGKAWNMFASKAYIHQYTKFGIEEEDFLDSFTSLEQVVASYCNL.

Residue 143 to 149 coordinates GTP; sequence AGGTGSG.

The protein belongs to the tubulin family. As to quaternary structure, found in a complex with TEDC1, TEDC2, TUBE1 and TUBD1.

The protein resides in the nucleus. It localises to the cytoplasm. Its subcellular location is the cytoskeleton. The protein localises to the microtubule organizing center. It is found in the centrosome. The protein resides in the centriole. It localises to the cell projection. Its subcellular location is the cilium. Acts as a positive regulator of hedgehog signaling and regulates ciliary function. In Homo sapiens (Human), this protein is Tubulin delta chain (TUBD1).